A 209-amino-acid polypeptide reads, in one-letter code: MAAAIAASALPGAFGRLVSVCSRSILASQGSGSASLWSASRRFNSQSASYPQGYVPKTSLSSPPWQEVVLPDPVEETRHHAEVVKRVNELIATGQYGRLFAVVHFASHQWKVTAEDLILIENELDIKCGERIRLEKVLLVGADNFTLLGKPLLRKELVRVEATVIEKTESWPKINMKFRKRKNFRKKKIIVNPQTILRINTIEIAPRLL.

Residues 1 to 43 (MAAAIAASALPGAFGRLVSVCSRSILASQGSGSASLWSASRRF) constitute a mitochondrion transit peptide.

Belongs to the bacterial ribosomal protein bL21 family. Component of the mitochondrial ribosome large subunit (39S) which comprises a 16S rRNA and about 50 distinct proteins.

It localises to the mitochondrion. The protein is Large ribosomal subunit protein bL21m (Mrpl21) of Mus musculus (Mouse).